The chain runs to 196 residues: UPF0215 protein MM_1007 (196 aa).

It belongs to the UPF0215 family.

The polypeptide is UPF0215 protein MM_1007 (Methanosarcina mazei (strain ATCC BAA-159 / DSM 3647 / Goe1 / Go1 / JCM 11833 / OCM 88) (Methanosarcina frisia)).